The primary structure comprises 94 residues: Probable Fe(2+)-trafficking protein (94 aa).

Belongs to the Fe(2+)-trafficking protein family.

Could be a mediator in iron transactions between iron acquisition and iron-requiring processes, such as synthesis and/or repair of Fe-S clusters in biosynthetic enzymes. The sequence is that of Probable Fe(2+)-trafficking protein from Alcanivorax borkumensis (strain ATCC 700651 / DSM 11573 / NCIMB 13689 / SK2).